The following is a 157-amino-acid chain: NADPH-dependent 7-cyano-7-deazaguanine reductase (157 aa).

Cys55 acts as the Thioimide intermediate in catalysis. Asp62 functions as the Proton donor in the catalytic mechanism. Residues 77–79 and 96–97 each bind substrate; these read VES and HE.

Belongs to the GTP cyclohydrolase I family. QueF type 1 subfamily.

The protein localises to the cytoplasm. It carries out the reaction 7-aminomethyl-7-carbaguanine + 2 NADP(+) = 7-cyano-7-deazaguanine + 2 NADPH + 3 H(+). The protein operates within tRNA modification; tRNA-queuosine biosynthesis. In terms of biological role, catalyzes the NADPH-dependent reduction of 7-cyano-7-deazaguanine (preQ0) to 7-aminomethyl-7-deazaguanine (preQ1). This chain is NADPH-dependent 7-cyano-7-deazaguanine reductase, found in Neisseria meningitidis serogroup C / serotype 2a (strain ATCC 700532 / DSM 15464 / FAM18).